The following is a 517-amino-acid chain: Nuclear receptor subfamily 5 group A member 2 (517 aa).

The segment at residues 43–118 is a DNA-binding region (nuclear receptor); that stretch reads DEMCPVCGDK…VGMKLEAVRA (76 aa). Residues Cys-46, Cys-49, Cys-63, Cys-66, Cys-82, Cys-88, Cys-98, and Cys-101 each contribute to the Zn(2+) site. 2 consecutive NR C4-type zinc fingers follow at residues 46–66 and 82–101; these read CPVCGDKVSGYHYGLLTCESC and CIENQSCQIDKTQRKRCPYC. Positions 112 to 127 are C-terminal extension (CTE); the sequence is KLEAVRADRMRGGRNK. An FTZ-F1 box motif is present at residues 128 to 147; sequence FGPMYKRDRALKQQKKALIR. Positions 182-211 are disordered; it reads GLPLSHHHHHHHHHHHHSSSSAGLPPADFD. Basic residues predominate over residues 186 to 199; sequence SHHHHHHHHHHHHS. Residues 276 to 515 enclose the NR LBD domain; the sequence is SFPHLVVELL…NLLIEMLHAK (240 aa). A phospholipid derivative-binding positions include 397-400, Tyr-492, and Lys-496; that span reads GATL. The tract at residues 504–515 is AF-2; sequence CNNLLIEMLHAK.

This sequence belongs to the nuclear hormone receptor family. NR5 subfamily. In terms of assembly, monomer; Binds DNA as a monomer.

It localises to the nucleus. The protein resides in the chromosome. Orphan nuclear receptor that binds DNA as a monomer to the 5'-TCAAGGCCA-3' sequence and controls expression of target genes: regulates key biological processes, such as cholesterol and bile acid synthesis pathways, as well as cartilage, liver and pancreas morphogenesis. Ligand-binding causes conformational change which causes recruitment of coactivators, promoting target gene activation. The specific ligand is unknown, but specific phospholipids, such as phosphatidylethanolamine, phosphatidylserine, dilauroyl phosphatidylcholine and diundecanoyl phosphatidylcholine can act as ligand in vitro. Acts as a pioneer transcription factor, which unwraps target DNA from histones and elicits local opening of closed chromatin. Involved in the formation of connective tissue in lower jaw. Functionally, lacks transcription factor activity; unable to activate expression of target genes. The chain is Nuclear receptor subfamily 5 group A member 2 from Danio rerio (Zebrafish).